Here is a 623-residue protein sequence, read N- to C-terminus: tRNA uridine 5-carboxymethylaminomethyl modification enzyme MnmG (623 aa).

FAD contacts are provided by residues 11–16, Val-123, and Ser-178; that span reads GAGHAG. Residue 270 to 284 participates in NAD(+) binding; that stretch reads GPRYCPSIETKIVTF. Residue Gln-367 coordinates FAD.

This sequence belongs to the MnmG family. Homodimer. Heterotetramer of two MnmE and two MnmG subunits. FAD is required as a cofactor.

The protein localises to the cytoplasm. NAD-binding protein involved in the addition of a carboxymethylaminomethyl (cmnm) group at the wobble position (U34) of certain tRNAs, forming tRNA-cmnm(5)s(2)U34. This Phocaeicola vulgatus (strain ATCC 8482 / DSM 1447 / JCM 5826 / CCUG 4940 / NBRC 14291 / NCTC 11154) (Bacteroides vulgatus) protein is tRNA uridine 5-carboxymethylaminomethyl modification enzyme MnmG.